The sequence spans 309 residues: HPr kinase/phosphorylase (309 aa).

Catalysis depends on residues H139 and K160. 154–161 (GESGIGKS) is an ATP binding site. Mg(2+) is bound at residue S161. D178 functions as the Proton acceptor; for phosphorylation activity. Proton donor; for dephosphorylation activity in the catalytic mechanism. Residues 202 to 211 (IELRGIGIID) form an important for the catalytic mechanism of both phosphorylation and dephosphorylation region. E203 provides a ligand contact to Mg(2+). R244 is an active-site residue. The segment at 265–270 (PIRPGR) is important for the catalytic mechanism of dephosphorylation.

The protein belongs to the HPrK/P family. As to quaternary structure, homohexamer. It depends on Mg(2+) as a cofactor.

The enzyme catalyses [HPr protein]-L-serine + ATP = [HPr protein]-O-phospho-L-serine + ADP + H(+). The catalysed reaction is [HPr protein]-O-phospho-L-serine + phosphate + H(+) = [HPr protein]-L-serine + diphosphate. In terms of biological role, catalyzes the ATP- as well as the pyrophosphate-dependent phosphorylation of a specific serine residue in HPr, a phosphocarrier protein of the phosphoenolpyruvate-dependent sugar phosphotransferase system (PTS). HprK/P also catalyzes the pyrophosphate-producing, inorganic phosphate-dependent dephosphorylation (phosphorolysis) of seryl-phosphorylated HPr (P-Ser-HPr). The two antagonistic activities of HprK/P are regulated by several intracellular metabolites, which change their concentration in response to the absence or presence of rapidly metabolisable carbon sources (glucose, fructose, etc.) in the growth medium. Therefore, by controlling the phosphorylation state of HPr, HPrK/P is a sensor enzyme that plays a major role in the regulation of carbon metabolism and sugar transport: it mediates carbon catabolite repression (CCR), and regulates PTS-catalyzed carbohydrate uptake and inducer exclusion. In Lachnoclostridium phytofermentans (strain ATCC 700394 / DSM 18823 / ISDg) (Clostridium phytofermentans), this protein is HPr kinase/phosphorylase.